The following is an 855-amino-acid chain: DNA mismatch repair protein MutS (855 aa).

Residue 618-625 (GPNMGGKS) coordinates ATP.

It belongs to the DNA mismatch repair MutS family.

In terms of biological role, this protein is involved in the repair of mismatches in DNA. It is possible that it carries out the mismatch recognition step. This protein has a weak ATPase activity. The polypeptide is DNA mismatch repair protein MutS (Shewanella loihica (strain ATCC BAA-1088 / PV-4)).